The primary structure comprises 166 residues: Lipoprotein signal peptidase (166 aa).

Helical transmembrane passes span 12-32 (WLWL…LILQ), 70-90 (WFFA…MYRS), and 102-122 (ALII…GFVV). Active-site residues include Asp-123 and Asp-141. A helical transmembrane segment spans residues 137 to 157 (FNLADSAICIGAALIVLEGFL).

The protein belongs to the peptidase A8 family.

It localises to the cell inner membrane. It catalyses the reaction Release of signal peptides from bacterial membrane prolipoproteins. Hydrolyzes -Xaa-Yaa-Zaa-|-(S,diacylglyceryl)Cys-, in which Xaa is hydrophobic (preferably Leu), and Yaa (Ala or Ser) and Zaa (Gly or Ala) have small, neutral side chains.. Its pathway is protein modification; lipoprotein biosynthesis (signal peptide cleavage). Functionally, this protein specifically catalyzes the removal of signal peptides from prolipoproteins. The polypeptide is Lipoprotein signal peptidase (Salmonella agona (strain SL483)).